A 129-amino-acid chain; its full sequence is Capsid protein (129 aa).

The viral RNA-binding stretch occupies residues 31–104 (EWISSNSRSQ…FATNSDCELI (74 aa)).

Belongs to the Leviviricetes capsid protein family. As to quaternary structure, homodimer. The capsid proteins form dimers that assemble by group of 5. Twelve such pentamers are linked together with free dimers. The homodimers binds to the viral RNA via an operator hairpin, but also to many other RNA sequences in the viral genome; this interaction probably shifts the virus from the replicative to the assembly phase and ensures specific encapsidation of the viral genome.

The protein localises to the virion. Its function is as follows. Capsid protein self-assembles to form an icosahedral capsid with a T=3 symmetry, about 26 nm in diameter, and consisting of 89 capsid proteins dimers (178 capsid proteins). Involved in viral genome encapsidation through the interaction between a capsid protein dimer and the multiple packaging signals present in the RNA genome. The capsid also contains 1 copy of the A2 maturation protein. In terms of biological role, acts as a translational repressor of viral replicase synthesis late in infection. This latter function is the result of capsid protein interaction with an RNA hairpin which contains the replicase ribosome-binding site. This Escherichia coli (Bacteriophage R17) protein is Capsid protein.